The primary structure comprises 175 residues: ATP-dependent protease subunit HslV (175 aa).

Thr2 is an active-site residue. The Na(+) site is built by Gly158, Cys161, and Thr164.

This sequence belongs to the peptidase T1B family. HslV subfamily. In terms of assembly, a double ring-shaped homohexamer of HslV is capped on each side by a ring-shaped HslU homohexamer. The assembly of the HslU/HslV complex is dependent on binding of ATP.

Its subcellular location is the cytoplasm. The catalysed reaction is ATP-dependent cleavage of peptide bonds with broad specificity.. Its activity is regulated as follows. Allosterically activated by HslU binding. Functionally, protease subunit of a proteasome-like degradation complex believed to be a general protein degrading machinery. The chain is ATP-dependent protease subunit HslV from Haemophilus influenzae (strain PittEE).